The chain runs to 117 residues: Appetite-regulating hormone (117 aa).

A signal peptide spans 1–23 (MPSLGTMCSLLLFSVLWVDLAMA). Serine 26 carries O-decanoyl serine; alternate lipidation. The O-hexanoyl serine; alternate moiety is linked to residue serine 26. A lipid anchor (O-octanoyl serine; alternate) is attached at serine 26. Residues 30 to 68 (PEHQKLQQRKESKKPPAKLQPRALEGSLGPEDTSQVEEA) are disordered. Residues 31 to 43 (EHQKLQQRKESKK) show a composition bias toward basic and acidic residues. Positions 52–75 (ALEGSLGPEDTSQVEEAEDELEIR) are cleaved as a propeptide — removed in mature form. Leucine 98 is modified (leucine amide). Residues 99-117 (GKFLQEVLWEDTNEALADE) constitute a propeptide, removed in mature form.

It belongs to the motilin family. O-octanoylated by GOAT/MBOAT4. O-octanoylation is essential for ghrelin activity. Post-translationally, amidation of Leu-98 is essential for obestatin activity.

It localises to the secreted. Ghrelin is the ligand for growth hormone secretagogue receptor type 1 (GHSR). Induces the release of growth hormone from the pituitary. Has an appetite-stimulating effect, induces adiposity and stimulates gastric acid secretion. Involved in growth regulation. Its function is as follows. Obestatin may be the ligand for GPR39. May have an appetite-reducing effect resulting in decreased food intake. May reduce gastric emptying activity and jejunal motility. The sequence is that of Appetite-regulating hormone (GHRL) from Canis lupus familiaris (Dog).